The following is a 78-amino-acid chain: Acyl carrier protein (78 aa).

One can recognise a Carrier domain in the interval 1 to 77 (MSEVEKKVID…DAIDYIEKNL (77 aa)). Position 37 is an O-(pantetheine 4'-phosphoryl)serine (Ser-37).

It belongs to the acyl carrier protein (ACP) family. 4'-phosphopantetheine is transferred from CoA to a specific serine of apo-ACP by AcpS. This modification is essential for activity because fatty acids are bound in thioester linkage to the sulfhydryl of the prosthetic group.

It is found in the cytoplasm. It functions in the pathway lipid metabolism; fatty acid biosynthesis. Functionally, carrier of the growing fatty acid chain in fatty acid biosynthesis. The chain is Acyl carrier protein from Porphyromonas gingivalis (strain ATCC 33277 / DSM 20709 / CIP 103683 / JCM 12257 / NCTC 11834 / 2561).